The chain runs to 420 residues: 3-phosphoshikimate 1-carboxyvinyltransferase (420 aa).

Residues K26, S27, and R31 each coordinate 3-phosphoshikimate. K26 contacts phosphoenolpyruvate. The phosphoenolpyruvate site is built by G97 and R125. Residues S170, S171, Q172, D297, N320, and K324 each contribute to the 3-phosphoshikimate site. Q172 serves as a coordination point for phosphoenolpyruvate. D297 functions as the Proton acceptor in the catalytic mechanism. R328, R375, and K400 together coordinate phosphoenolpyruvate.

It belongs to the EPSP synthase family. Monomer.

The protein resides in the cytoplasm. The catalysed reaction is 3-phosphoshikimate + phosphoenolpyruvate = 5-O-(1-carboxyvinyl)-3-phosphoshikimate + phosphate. It functions in the pathway metabolic intermediate biosynthesis; chorismate biosynthesis; chorismate from D-erythrose 4-phosphate and phosphoenolpyruvate: step 6/7. In terms of biological role, catalyzes the transfer of the enolpyruvyl moiety of phosphoenolpyruvate (PEP) to the 5-hydroxyl of shikimate-3-phosphate (S3P) to produce enolpyruvyl shikimate-3-phosphate and inorganic phosphate. This chain is 3-phosphoshikimate 1-carboxyvinyltransferase, found in Rhizobium leguminosarum bv. trifolii (strain WSM2304).